A 442-amino-acid chain; its full sequence is tRNA-2-methylthio-N(6)-dimethylallyladenosine synthase (442 aa).

An MTTase N-terminal domain is found at 3 to 120; it reads KKLYIETHGC…LPEMIDAARV (118 aa). 6 residues coordinate [4Fe-4S] cluster: Cys12, Cys49, Cys83, Cys157, Cys161, and Cys164. The Radical SAM core domain occupies 143–375; that stretch reads RVDGPSAYVS…QHRLNQQGFE (233 aa). The TRAM domain maps to 378–442; it reads RQMVGSIQRI…PHSLRGSLLQ (65 aa).

The protein belongs to the methylthiotransferase family. MiaB subfamily. Monomer. The cofactor is [4Fe-4S] cluster.

It is found in the cytoplasm. The enzyme catalyses N(6)-dimethylallyladenosine(37) in tRNA + (sulfur carrier)-SH + AH2 + 2 S-adenosyl-L-methionine = 2-methylsulfanyl-N(6)-dimethylallyladenosine(37) in tRNA + (sulfur carrier)-H + 5'-deoxyadenosine + L-methionine + A + S-adenosyl-L-homocysteine + 2 H(+). Functionally, catalyzes the methylthiolation of N6-(dimethylallyl)adenosine (i(6)A), leading to the formation of 2-methylthio-N6-(dimethylallyl)adenosine (ms(2)i(6)A) at position 37 in tRNAs that read codons beginning with uridine. The sequence is that of tRNA-2-methylthio-N(6)-dimethylallyladenosine synthase from Pseudomonas syringae pv. syringae (strain B728a).